The following is a 595-amino-acid chain: SVP1-like protein 2 (595 aa).

Residues 1–28 (MVLAHSINTNPNTNTNTNNTSTTSSTTT) form a disordered region. Residues 30-68 (PNDSKILCINFNQDQGCFAISHEQGFLVYNTDPIELRVK) form a WD 1 repeat. Low complexity-rich tracts occupy residues 76-112 (HTTSSRSNHSNGSNSNNNHRNNSTGSNGSVSSSGSNN) and 270-339 (LSPT…TTTT). Disordered regions lie at residues 76 to 132 (HTTS…GSGS) and 264 to 342 (FSKR…TSAK). WD repeat units follow at residues 389-429 (AHKS…LLYE) and 434-473 (IDRAIITSMKFSHDDSKLAVLSDKHTLHVYNIDETQYPND). Positions 467–490 (ETQYPNDGGSGGTKDGGGGGRGSK) are disordered. The segment covering 474 to 488 (GGSGGTKDGGGGGRG) has biased composition (gly residues).

Belongs to the WD repeat PROPPIN family.

It is found in the vacuole membrane. Its subcellular location is the cytoplasmic vesicle membrane. Its function is as follows. Involved in mitochondrial or peroxisomal functions and amino acid signaling pathways. The polypeptide is SVP1-like protein 2 (HSV2) (Candida albicans (strain SC5314 / ATCC MYA-2876) (Yeast)).